Here is a 428-residue protein sequence, read N- to C-terminus: Elongation factor 1-alpha (428 aa).

The 221-residue stretch at 5–225 (KPILNVAFIG…DGFQPPEKPT (221 aa)) folds into the tr-type G domain. The interval 14-21 (GHVDAGKS) is G1. 14 to 21 (GHVDAGKS) contacts GTP. Ser21 serves as a coordination point for Mg(2+). The G2 stretch occupies residues 70–74 (GVTID). The interval 91–94 (DCPG) is G3. GTP is bound by residues 91 to 95 (DCPGH) and 149 to 152 (NKMD). The tract at residues 149–152 (NKMD) is G4. The interval 189–191 (ASL) is G5.

The protein belongs to the TRAFAC class translation factor GTPase superfamily. Classic translation factor GTPase family. EF-Tu/EF-1A subfamily.

The protein localises to the cytoplasm. It carries out the reaction GTP + H2O = GDP + phosphate + H(+). Functionally, GTP hydrolase that promotes the GTP-dependent binding of aminoacyl-tRNA to the A-site of ribosomes during protein biosynthesis. In Methanococcus vannielii (strain ATCC 35089 / DSM 1224 / JCM 13029 / OCM 148 / SB), this protein is Elongation factor 1-alpha.